Consider the following 550-residue polypeptide: Chaperonin GroEL (550 aa).

Residues 30–33, lysine 51, 87–91, glycine 416, 480–482, and aspartate 496 contribute to the ATP site; these read TLGP, DGTTT, and NVA. The segment at 525–550 is disordered; sequence LPKKDDEGGGGDMGGMGGMGGMGGMM. Gly residues predominate over residues 534–550; it reads GGDMGGMGGMGGMGGMM.

This sequence belongs to the chaperonin (HSP60) family. In terms of assembly, forms a cylinder of 14 subunits composed of two heptameric rings stacked back-to-back. Interacts with the co-chaperonin GroES.

The protein resides in the cytoplasm. It catalyses the reaction ATP + H2O + a folded polypeptide = ADP + phosphate + an unfolded polypeptide.. In terms of biological role, together with its co-chaperonin GroES, plays an essential role in assisting protein folding. The GroEL-GroES system forms a nano-cage that allows encapsulation of the non-native substrate proteins and provides a physical environment optimized to promote and accelerate protein folding. The protein is Chaperonin GroEL of Halorhodospira halophila (strain DSM 244 / SL1) (Ectothiorhodospira halophila (strain DSM 244 / SL1)).